Here is a 480-residue protein sequence, read N- to C-terminus: Membrane-bound lytic murein transglycosylase F (480 aa).

The signal sequence occupies residues 1-15; that stretch reads MKKLLFVLLTITLLA. The segment at 16-259 is non-LT domain; that stretch reads SCQKVSVEQT…HLNEKYFAHV (244 aa). An LT domain region spans residues 260–480; the sequence is KRFDYVDTRA…QENLSGAQPQ (221 aa). Glu304 is an active-site residue.

This sequence in the N-terminal section; belongs to the bacterial solute-binding protein 3 family. The protein in the C-terminal section; belongs to the transglycosylase Slt family.

It localises to the cell outer membrane. The catalysed reaction is Exolytic cleavage of the (1-&gt;4)-beta-glycosidic linkage between N-acetylmuramic acid (MurNAc) and N-acetylglucosamine (GlcNAc) residues in peptidoglycan, from either the reducing or the non-reducing ends of the peptidoglycan chains, with concomitant formation of a 1,6-anhydrobond in the MurNAc residue.. In terms of biological role, murein-degrading enzyme that degrades murein glycan strands and insoluble, high-molecular weight murein sacculi, with the concomitant formation of a 1,6-anhydromuramoyl product. Lytic transglycosylases (LTs) play an integral role in the metabolism of the peptidoglycan (PG) sacculus. Their lytic action creates space within the PG sacculus to allow for its expansion as well as for the insertion of various structures such as secretion systems and flagella. The chain is Membrane-bound lytic murein transglycosylase F from Shewanella sediminis (strain HAW-EB3).